The primary structure comprises 193 residues: Xanthine phosphoribosyltransferase (193 aa).

Xanthine-binding residues include leucine 20 and asparagine 27. 129 to 133 (ANGKA) serves as a coordination point for 5-phospho-alpha-D-ribose 1-diphosphate. Lysine 157 is a xanthine binding site.

The protein belongs to the purine/pyrimidine phosphoribosyltransferase family. Xpt subfamily. Homodimer.

It is found in the cytoplasm. The enzyme catalyses XMP + diphosphate = xanthine + 5-phospho-alpha-D-ribose 1-diphosphate. It functions in the pathway purine metabolism; XMP biosynthesis via salvage pathway; XMP from xanthine: step 1/1. Functionally, converts the preformed base xanthine, a product of nucleic acid breakdown, to xanthosine 5'-monophosphate (XMP), so it can be reused for RNA or DNA synthesis. This chain is Xanthine phosphoribosyltransferase, found in Bifidobacterium animalis subsp. lactis (strain AD011).